A 364-amino-acid chain; its full sequence is UDP-N-acetylglucosamine--N-acetylmuramyl-(pentapeptide) pyrophosphoryl-undecaprenol N-acetylglucosamine transferase (364 aa).

UDP-N-acetyl-alpha-D-glucosamine is bound by residues 10 to 12 (TGG), Asn-124, Arg-165, Ser-193, Ile-248, and Gln-293.

It belongs to the glycosyltransferase 28 family. MurG subfamily.

It is found in the cell inner membrane. The enzyme catalyses di-trans,octa-cis-undecaprenyl diphospho-N-acetyl-alpha-D-muramoyl-L-alanyl-D-glutamyl-meso-2,6-diaminopimeloyl-D-alanyl-D-alanine + UDP-N-acetyl-alpha-D-glucosamine = di-trans,octa-cis-undecaprenyl diphospho-[N-acetyl-alpha-D-glucosaminyl-(1-&gt;4)]-N-acetyl-alpha-D-muramoyl-L-alanyl-D-glutamyl-meso-2,6-diaminopimeloyl-D-alanyl-D-alanine + UDP + H(+). It functions in the pathway cell wall biogenesis; peptidoglycan biosynthesis. Functionally, cell wall formation. Catalyzes the transfer of a GlcNAc subunit on undecaprenyl-pyrophosphoryl-MurNAc-pentapeptide (lipid intermediate I) to form undecaprenyl-pyrophosphoryl-MurNAc-(pentapeptide)GlcNAc (lipid intermediate II). The sequence is that of UDP-N-acetylglucosamine--N-acetylmuramyl-(pentapeptide) pyrophosphoryl-undecaprenol N-acetylglucosamine transferase from Geobacter sulfurreducens (strain ATCC 51573 / DSM 12127 / PCA).